The chain runs to 536 residues: Apolipoprotein N-acyltransferase (536 aa).

Helical transmembrane passes span 34–54 (PLWW…RPGA), 64–84 (ALIG…WLFI), 89–109 (YGAL…AFLA), 129–149 (GAAL…GSLW), 172–192 (YVGV…CVQW), and 199–219 (HWPM…AAVQ). In terms of domain architecture, CN hydrolase spans 244 to 487 (LQGNIAQDEK…RGVLRGQVHG (244 aa)). The active-site Proton acceptor is the glutamate 283. Lysine 345 is a catalytic residue. Residue cysteine 395 is the Nucleophile of the active site. The chain crosses the membrane as a helical span at residues 503 to 523 (WWVARWGLWPLWALAALALAW).

The protein belongs to the CN hydrolase family. Apolipoprotein N-acyltransferase subfamily.

The protein localises to the cell inner membrane. The enzyme catalyses N-terminal S-1,2-diacyl-sn-glyceryl-L-cysteinyl-[lipoprotein] + a glycerophospholipid = N-acyl-S-1,2-diacyl-sn-glyceryl-L-cysteinyl-[lipoprotein] + a 2-acyl-sn-glycero-3-phospholipid + H(+). It participates in protein modification; lipoprotein biosynthesis (N-acyl transfer). In terms of biological role, catalyzes the phospholipid dependent N-acylation of the N-terminal cysteine of apolipoprotein, the last step in lipoprotein maturation. This Verminephrobacter eiseniae (strain EF01-2) protein is Apolipoprotein N-acyltransferase.